We begin with the raw amino-acid sequence, 292 residues long: MELGMFRLNIYQPGGPIGALYPVEKILYHGRSQYQEIMILVLRGFGKTLVLDGLIQSTESDEHIYHETLVHPAMTVHPNPRRVLILGGGEGATLREVLKHNTVEKAVMVDIDGEVVRVAREYLPEWHQGAFDDPRAQVVIMDGFEYIKEAARRGEDFDVIIMDLTDPFGPKIAAKLYTKEAIGLVKSVLRSDGILVTQAGCAALFPEAFEKVYGSVKSLFAHAEEYGVWVPSFMYVNSFVFASDKYRLTDLSMEEVDRRLRERGVETRFYSGLRHYTLIGLGGIRLLEGRGS.

The PABS domain maps to 1–244 (MELGMFRLNI…YVNSFVFASD (244 aa)). Q35 serves as a coordination point for S-methyl-5'-thioadenosine. Spermidine-binding residues include H66 and E90. S-methyl-5'-thioadenosine is bound by residues D110 and 142 to 143 (DG). The active-site Proton acceptor is the D163.

This sequence belongs to the spermidine/spermine synthase family. In terms of assembly, homodimer or homotetramer.

It is found in the cytoplasm. The enzyme catalyses norspermine + S-adenosyl 3-(methylsulfanyl)propylamine = caldopentamine + S-methyl-5'-thioadenosine + 2 H(+). It catalyses the reaction norspermidine + S-adenosyl 3-(methylsulfanyl)propylamine = norspermine + S-methyl-5'-thioadenosine + H(+). The catalysed reaction is S-adenosyl 3-(methylsulfanyl)propylamine + spermidine = thermospermine + S-methyl-5'-thioadenosine + H(+). Its function is as follows. Involved in the biosynthesis of polyamines which are thought to support the growth of thermophilic microorganisms under high-temperature conditions. It seems that long-chain and branched-chain of polyamines effectively stabilize DNA and RNA, respectively. Catalyzes the irreversible transfer of a propylamine group from the amino donor S-adenosylmethioninamine (decarboxy-AdoMet) to norspermidine, spermidine and norspermine to yield norspermine, thermospermine and caldopentamine, respectively. It can also synthesize sym-norspermidine (bis(3-aminopropyl)amine) from 1,3-diaminopropane with a very low activity. The biosynthesis of caldohexamine and caldoheptamine from caldopentamine has been also observed. This Hyperthermus butylicus (strain DSM 5456 / JCM 9403 / PLM1-5) protein is Polyamine aminopropyltransferase 1.